We begin with the raw amino-acid sequence, 79 residues long: Three-finger toxin A2 (79 aa).

The signal sequence occupies residues 1–21 (MKTLLLTLVVVTIVCLDLGNS). Intrachain disulfides connect C24/C41, C34/C59, C63/C71, and C72/C77.

This sequence belongs to the three-finger toxin family. Short-chain subfamily. As to expression, expressed by the venom gland.

It is found in the secreted. This is Three-finger toxin A2 from Micrurus laticollaris (Balsas coral snake).